Reading from the N-terminus, the 182-residue chain is Pentatricopeptide repeat-containing protein At2g01360 (182 aa).

PPR repeat units lie at residues 30–64 (EKSA…QHSL), 65–95 (GVYH…LPDD), and 98–132 (GLSA…EIMP).

It belongs to the PPR family. P subfamily.

This is Pentatricopeptide repeat-containing protein At2g01360 from Arabidopsis thaliana (Mouse-ear cress).